Consider the following 132-residue polypeptide: MIYGVGTDICDVRRIRASLERHGERLAQKILSEAELATWKERSERWPDRGVRYLATRFSAKEAFSKAIGLGMRMPMTWRHCEISKAASGKPEIVLHGPLKDWFETRQLSVHVSVTDENEYAASFCVVEKNDF.

Mg(2+) is bound by residues D8 and E62.

Belongs to the P-Pant transferase superfamily. AcpS family. Mg(2+) serves as cofactor.

The protein localises to the cytoplasm. It catalyses the reaction apo-[ACP] + CoA = holo-[ACP] + adenosine 3',5'-bisphosphate + H(+). In terms of biological role, transfers the 4'-phosphopantetheine moiety from coenzyme A to a Ser of acyl-carrier-protein. This is Holo-[acyl-carrier-protein] synthase from Polaromonas sp. (strain JS666 / ATCC BAA-500).